Reading from the N-terminus, the 1801-residue chain is Protein mono-ADP-ribosyltransferase PARP14 (1801 aa).

Phosphoserine is present on Ser33. Residues 109 to 132 (SKTKEDVKEPDVSEELDTKLPLDG) form a disordered region. 3 consecutive Macro domains span residues 791 to 978 (KCFS…KTVF), 1003 to 1190 (WEKG…ARRA), and 1216 to 1387 (DSGV…KKRE). A glycoprotein-binding positions include Asn824, Leu833, 922-926 (SSGVF), Asp961, 1023-1024 (VQ), Ser1034, 1046-1049 (LSKS), 1133-1137 (GTGNL), 1175-1178 (DHEN), 1235-1236 (DI), Ser1247, Val1258, 1332-1336 (GTGNA), and Phe1371. Residues Ser1403 and Ser1411 each carry the phosphoserine modification. A WWE domain is found at 1523–1601 (EQESRADCIS…SLSVQRLTKS (79 aa)). One can recognise a PARP catalytic domain in the interval 1605–1801 (IPAHWSDMKQ…YPEYLITFRK (197 aa)).

Belongs to the ARTD/PARP family. As to quaternary structure, interacts with STAT6. Interacts with PARP10. Interacts with PARP9 in IFNG-stimulated macrophages; the interaction prevents PARP14-mediated STAT1 and STAT6 ADP-riboslylation. Auto-ADP-ribosylated. Expressed in macrophages.

It localises to the nucleus. The protein localises to the cytoplasm. The catalysed reaction is L-glutamyl-[protein] + NAD(+) = 5-O-(ADP-D-ribosyl)-L-glutamyl-[protein] + nicotinamide. Functionally, ADP-ribosyltransferase that mediates mono-ADP-ribosylation of glutamate residues on target proteins. In contrast to PARP1 and PARP2, it is not able to mediate poly-ADP-ribosylation. Has been shown to catalyze the mono-ADP-ribosylation of STAT1 at 'Glu-657' and 'Glu-705', thus decreasing STAT1 phosphorylation which negatively regulates pro-inflammatory cytokine production in macrophages in response to IFNG stimulation. However, the role of ADP-ribosylation in the prevention of STAT1 phosphorylation has been called into question and it has been suggested that the inhibition of phosphorylation may be the result of sumoylation of STAT1 'Lys-703'. Mono-ADP-ribosylates STAT6; enhancing STAT6-dependent transcription. In macrophages, positively regulates MRC1 expression in response to IL4 stimulation by promoting STAT6 phosphorylation. Mono-ADP-ribosylates PARP9. This chain is Protein mono-ADP-ribosyltransferase PARP14, found in Homo sapiens (Human).